Reading from the N-terminus, the 428-residue chain is MRDEVAEKEKADINVTLVFQGYENTPIMVCVDGIVFSKPDLVTCLEQRKKPWSMKHPGLTQHNIVHTGDKPYKCKDCGKIFKWSSNLTIHQRIHSGEKPYKCEECGKAFKQSSKLNEHMRAHTGEKFYKCEECGKAFKHPSGLTLHKRIHTGENPYKFEECDKAFYWVLSFTKHMIIHRGEKPYKYQECGKAFKWSSNLTIHKRIHTGEKPCKCEECGKACKQSLGLTIQKRIHTEEKPYKCEECGSSNLTIYKKIHAGEKPYNCEKCGKAFYCSSNLIQNNIVHAEEKHYKCQECGKAFKKSLDLNVHKIIHSGEKPYRYEECGKITHSGEESYKCEECGKGFYCSSSLTKHMIVHTEEKLYKCEECGKAFKWSSELTIHQRIRTEEKPYKCEECVRVFKHSSKLNEHKRNHTGEKPYKCEACGKAF.

Positions 1–64 constitute a KRAB domain; sequence MRDEVAEKEK…KHPGLTQHNI (64 aa). 3 consecutive C2H2-type zinc fingers follow at residues 72–94, 100–122, and 128–150; these read YKCK…QRIH, YKCE…MRAH, and YKCE…KRIH. The C2H2-type 4; degenerate zinc-finger motif lies at 156–178; sequence YKFEECDKAFYWVLSFTKHMIIH. Residues 184 to 206 form a C2H2-type 5; degenerate zinc finger; it reads YKYQECGKAFKWSSNLTIHKRIH. Residues 212–234 form a C2H2-type 6; degenerate zinc finger; it reads CKCEECGKACKQSLGLTIQKRIH. The C2H2-type 7; degenerate zinc-finger motif lies at 263–285; the sequence is YNCEKCGKAFYCSSNLIQNNIVH. 2 C2H2-type zinc fingers span residues 291–313 and 335–357; these read YKCQ…KIIH and YKCE…MIVH. A C2H2-type 10; degenerate zinc finger spans residues 363–385; it reads YKCEECGKAFKWSSELTIHQRIR. The segment at 391–413 adopts a C2H2-type 11 zinc-finger fold; sequence YKCEECVRVFKHSSKLNEHKRNH.

The protein belongs to the krueppel C2H2-type zinc-finger protein family.

The protein localises to the nucleus. Functionally, may be involved in transcriptional regulation. The polypeptide is Putative zinc finger protein 355P (ZNF355P) (Homo sapiens (Human)).